Consider the following 409-residue polypeptide: Elongation factor Tu, plastid (409 aa).

A tr-type G domain is found at Lys10 to Ile214. The G1 stretch occupies residues Gly19–Thr26. Position 19–26 (Gly19–Thr26) interacts with GTP. Thr26 contacts Mg(2+). The G2 stretch occupies residues Gly60–Asn64. The segment at Asp81–Gly84 is G3. GTP contacts are provided by residues Asp81–His85 and Asn136–Asp139. Residues Asn136–Asp139 are G4. The segment at Ser174–Leu176 is G5.

Belongs to the TRAFAC class translation factor GTPase superfamily. Classic translation factor GTPase family. EF-Tu/EF-1A subfamily.

Its subcellular location is the plastid. It catalyses the reaction GTP + H2O = GDP + phosphate + H(+). Functionally, GTP hydrolase that promotes the GTP-dependent binding of aminoacyl-tRNA to the A-site of ribosomes during protein biosynthesis. This chain is Elongation factor Tu, plastid (tufA), found in Euglena longa (Euglenophycean alga).